Consider the following 255-residue polypeptide: Probable membrane transporter protein HI_0198 (255 aa).

8 helical membrane passes run 7 to 27, 28 to 48, 76 to 96, 99 to 119, 132 to 152, 153 to 173, 191 to 211, and 235 to 255; these read LLAI…IAGG, GGLI…MALG, IWFI…LIQS, VAIF…YFLF, LSYL…DGFF, GPGT…FNLP, FALF…MMAG, and VVIM…WFHF.

This sequence belongs to the 4-toluene sulfonate uptake permease (TSUP) (TC 2.A.102) family.

Its subcellular location is the cell membrane. The chain is Probable membrane transporter protein HI_0198 from Haemophilus influenzae (strain ATCC 51907 / DSM 11121 / KW20 / Rd).